The chain runs to 259 residues: Major prion protein (259 aa).

A signal peptide spans 1–24; the sequence is MGKIQLGYWILVLFIVTWSDLGLC. Positions 25-235 are interaction with GRB2, ERI3 and SYN1; it reads KKPKPRPGGG…EYEAAAQRAY (211 aa). The interval 29–110 is disordered; it reads PRPGGGWNSG…GYNKWKPDKP (82 aa). The Cu(2+) site is built by Gly-63, Gly-64, His-72, Gly-74, His-82, Gly-84, His-92, and Gly-94. Residues 91–101 are compositionally biased toward gly residues; the sequence is PHGGSNWGQGG. A disulfide bond links Cys-184 and Cys-219. N-linked (GlcNAc...) asparagine glycans are attached at residues Asn-186 and Asn-202. Residue Asn-236 is the site of GPI-anchor amidated asparagine attachment. Residues 237 to 259 constitute a propeptide, removed in mature form; the sequence is MAFFSAPPVTLLFLSFLIFLIVS.

It belongs to the prion family. Monomer and homodimer. Has a tendency to aggregate into amyloid fibrils containing a cross-beta spine, formed by a steric zipper of superposed beta-strands. Soluble oligomers may represent an intermediate stage on the path to fibril formation. Copper binding may promote oligomerization. Interacts with GRB2, APP, ERI3/PRNPIP and SYN1. Mislocalized cytosolically exposed PrP interacts with MGRN1; this interaction alters MGRN1 subcellular location and causes lysosomal enlargement. Interacts with KIAA1191.

It is found in the cell membrane. The protein localises to the golgi apparatus. Its primary physiological function is unclear. Has cytoprotective activity against internal or environmental stresses. May play a role in neuronal development and synaptic plasticity. May be required for neuronal myelin sheath maintenance. May play a role in iron uptake and iron homeostasis. Soluble oligomers are toxic to cultured neuroblastoma cells and induce apoptosis (in vitro). Association with GPC1 (via its heparan sulfate chains) targets PRNP to lipid rafts. Also provides Cu(2+) or Zn(2+) for the ascorbate-mediated GPC1 deaminase degradation of its heparan sulfate side chains. The sequence is that of Major prion protein (PRNP) from Trichosurus vulpecula (Brush-tailed possum).